A 774-amino-acid polypeptide reads, in one-letter code: Armadillo-like helical domain-containing protein 4 (774 aa).

The first 27 residues, 1–27 (MRGPIVLHICLAFCSLLLFSVATQCLA), serve as a signal peptide directing secretion. Residues 28-714 (FPKIERRREI…KDKAGYMSGM (687 aa)) lie on the Extracellular side of the membrane. A compositionally biased stretch (basic and acidic residues) spans 41 to 52 (HAEKGQSDKMNT). Disordered regions lie at residues 41–63 (HAEKGQSDKMNTDDLENSSVTSK) and 97–135 (QPGQAGLMQTERPGVSTPTESGVPSAEEVFGSSQPERIS). N57 is a glycosylation site (N-linked (GlcNAc...) asparagine). N189 carries N-linked (GlcNAc...) asparagine glycosylation. A compositionally biased stretch (basic and acidic residues) spans 221 to 233 (KTEKFEADTDHRT). 2 disordered regions span residues 221-275 (KTEK…QPLE) and 600-669 (ASYG…PGLE). Polar residues predominate over residues 258 to 275 (SQMTADNTQAAATKQPLE). Positions 607–651 (LESEEGQEDEDEEDEEDEDEEEEDEEEDEEDKDADSLDEGLDGDT) are enriched in acidic residues. A helical membrane pass occupies residues 715–735 (LVPVGVGIAGALFILGALYSI). Residues 736–774 (KVMNRRRRNGFKRHKRKQREFNSMQDRVMLLADSSEDEF) lie on the Cytoplasmic side of the membrane. Residues S769 and S770 each carry the phosphoserine modification.

Interacts with IL6ST; this interaction prevents IL6ST protein homodimerization and bridges ARMH4 with IL6R and STAT3 and therefore inhibits phosphorylation of STAT3 at 'Tyr-705'. Interacts (via cytoplasmic tail) with RICTOR; this interaction bridges ARMH4 to the mTORC2 complex and inhibits the mTORC2 kinase activity. Expressed in podocytes.

The protein resides in the membrane. Its function is as follows. May modulate immune response and may play a role in inflammation. Down-modulates STAT3 signaling throught direct interaction with IL6ST, resulting in the inhibition of phosphorylation of STAT3 at 'Tyr-705'. May negatively regulates AKT signaling by modulating the activity of mTORC2 complex through RICTOR interaction. The protein is Armadillo-like helical domain-containing protein 4 of Homo sapiens (Human).